Reading from the N-terminus, the 426-residue chain is Phosphomethylpyrimidine synthase (426 aa).

Residues asparagine 65, methionine 94, tyrosine 123, histidine 162, 184 to 186 (SRG), 225 to 228 (DGMR), and glutamate 264 contribute to the substrate site. Histidine 268 lines the Zn(2+) pocket. Residue tyrosine 291 coordinates substrate. Residue histidine 332 coordinates Zn(2+). Residues cysteine 408, cysteine 411, and cysteine 415 each contribute to the [4Fe-4S] cluster site.

It belongs to the ThiC family. [4Fe-4S] cluster is required as a cofactor.

The catalysed reaction is 5-amino-1-(5-phospho-beta-D-ribosyl)imidazole + S-adenosyl-L-methionine = 4-amino-2-methyl-5-(phosphooxymethyl)pyrimidine + CO + 5'-deoxyadenosine + formate + L-methionine + 3 H(+). The protein operates within cofactor biosynthesis; thiamine diphosphate biosynthesis. Its function is as follows. Catalyzes the synthesis of the hydroxymethylpyrimidine phosphate (HMP-P) moiety of thiamine from aminoimidazole ribotide (AIR) in a radical S-adenosyl-L-methionine (SAM)-dependent reaction. This Methanococcus maripaludis (strain C7 / ATCC BAA-1331) protein is Phosphomethylpyrimidine synthase.